A 203-amino-acid polypeptide reads, in one-letter code: Probable chemoreceptor glutamine deamidase CheD (203 aa).

Belongs to the CheD family.

The enzyme catalyses L-glutaminyl-[protein] + H2O = L-glutamyl-[protein] + NH4(+). Functionally, probably deamidates glutamine residues to glutamate on methyl-accepting chemotaxis receptors (MCPs), playing an important role in chemotaxis. In Herminiimonas arsenicoxydans, this protein is Probable chemoreceptor glutamine deamidase CheD.